The primary structure comprises 37 residues: Mastoparan-VT (37 aa).

A propeptide spanning residues Glu1–Ala22 is cleaved from the precursor. 4 AXPX repeats span residues Ala4–Ile7, Ala8–Val11, Ala12–Asn15, and Ala18–Glu21. Position 36 is a leucine amide (Leu36).

Belongs to the MCD family. Mastoparan subfamily. Expressed by the venom gland.

It localises to the secreted. Its subcellular location is the target cell membrane. In terms of biological role, antimicrobial peptide with potent activity against both Gram-positive (S.aureus MIC=50 ug/ml, and B.subtilis MIC=25 ug/ml) and Gram-negative bacteria (P.aeruginosa MIC=25 ug/ml, E.coli MIC=3-50 ug/ml, K.pneumoniae MIC=25 ug/ml). Exhibits little hemolytic activity on human erythrocytes. The polypeptide is Mastoparan-VT (Vespa tropica (Greater banded hornet)).